The primary structure comprises 327 residues: Secondary metabolism regulator LAE1 (327 aa).

This sequence belongs to the methyltransferase superfamily. LaeA methyltransferase family.

The protein resides in the nucleus. The enzyme catalyses L-methionyl-[protein] + S-adenosyl-L-methionine = S-methyl-L-methionyl-[protein] + S-adenosyl-L-homocysteine. In terms of biological role, secondary metabolism regulator that controls the expression of the tenuazonic acid biosynthesis cluster. Methyltransferase that performs automethylation. No other methyl-accepting substrate has been identified yet. The protein is Secondary metabolism regulator LAE1 of Pyricularia oryzae (strain 70-15 / ATCC MYA-4617 / FGSC 8958) (Rice blast fungus).